We begin with the raw amino-acid sequence, 34 residues long: Mu-theraphotoxin-CCy1a (34 aa).

Intrachain disulfides connect cysteine 3–cysteine 18, cysteine 10–cysteine 23, and cysteine 17–cysteine 30.

The protein belongs to the neurotoxin 10 (Hwtx-1) family. 14 (Hntx-1) subfamily. Expressed by the venom gland.

The protein localises to the secreted. Functionally, voltage-gated sodium channel Nav1.7/SCN9A inhibitor. The sequence is that of Mu-theraphotoxin-CCy1a from Chromatopelma cyaneopubescens (Greenbottle blue tarantula).